The primary structure comprises 2752 residues: MYNGIGLPTPRGSGTNGYVQRNLSLVRGRRGERPDYKGEEELRRLEAALVKRPNPDILDHERKRRVELRCLELEEMMEEQGYEEQQIQEKVATFRLMLLEKDVNPGGKEETPGQRPAVTETHQLAELNEKKNERLRAAFGISDSYVDGSSFDPQRRAREAKQPAPEPPKPYSLVRESSSSRSPTPKQKKKKKKKDRGRRSESSSPRRERKKSSKKKKHRSESESKKRKHRSPTPKSKRKSKDKKRKRSRSTTPAPKSRRAHRSTSADSASSSDTSRSRSRSAAAKTHTTALAGRSPSPASGRRGEGDAPFSEPGTTSTQRPSSPETATKQPSSPYEDKDKDKKEKSATRPSPSPERSSTGPEPPAPTPLLAERHGGSPQPLATTPLSQEPVNPPSEASPTRDRSPPKSPEKLPQSSSSESSPPSPQPTKVSRHASSSPESPKPAPAPGSHREISSSPTSKNRSHGRAKRDKSHSHTPSRRMGRSRSPATAKRGRSRSRTPTKRGHSRSRSPQWRRSRSAQRWGRSRSPQRRGRSRSPQRPGWSRSRNTQRRGRSRSARRGRSHSRSPATRGRSRSRTPARRGRSRSRTPARRRSRSRTPTRRRSRSRTPARRGRSRSRTPARRRSRTRSPVRRRSRSRSPARRSGRSRSRTPARRGRSRSRTPARRGRSRSRTPARRSGRSRSRTPARRGRSRSRTPRRGRSRSRSLVRRGRSHSRTPQRRGRSGSSSERKNKSRTSQRRSRSNSSPEMKKSRISSRRSRSLSSPRSKAKSRLSLRRSLSGSSPCPKQKSQTPPRRSRSGSSQPKAKSRTPPRRSRSSSSPPPKQKSKTPSRQSHSSSSPHPKVKSGTPPRQGSITSPQANEQSVTPQRRSCFESSPDPELKSRTPSRHSCSGSSPPRVKSSTPPRQSPSRSSSPQPKVKAIISPRQRSHSGSSSPSPSRVTSRTTPRRSRSVSPCSNVESRLLPRYSHSGSSSPDTKVKPETPPRQSHSGSISPYPKVKAQTPPGPSLSGSKSPCPQEKSKDSLVQSCPGSLSLCAGVKSSTPPGESYFGVSSLQLKGQSQTSPDHRSDTSSPEVRQSHSESPSLQSKSQTSPKGGRSRSSSPVTELASRSPIRQDRGEFSASPMLKSGMSPEQSRFQSDSSSYPTVDSNSLLGQSRLETAESKEKMALPPQEDATASPPRQKDKFSPFPVQDRPESSLVFKDTLRTPPRERSGAGSSPETKEQNSALPTSSQDEELMEVVEKSEEPAGQILSHLSSELKEMSTSNFESSPEVEERPAVSLTLDQSQSQASLEAVEVPSMASSWGGPHFSPEHKELSNSPLRENSFGSPLEFRNSGPLGTEMNTGFSSEVKEDLNGPFLNQLETDPSLDMKEQSTRSSGHSSSELSPDAVEKAGMSSNQSISSPVLDAVPRTPSRERSSSASSPEMKDGLPRTPSRRSRSGSSPGLRDGSGTPSRHSLSGSSPGMKDIPRTPSRGRSECDSSPEPKALPQTPRPRSRSPSSPELNNKCLTPQRERSGSESSVDQKTVARTPLGQRSRSGSSQELDVKPSASPQERSESDSSPDSKAKTRTPLRQRSRSGSSPEVDSKSRLSPRRSRSGSSPEVKDKPRAAPRAQSGSDSSPEPKAPAPRALPRRSRSGSSSKGRGPSPEGSSSTESSPEHPPKSRTARRGSRSSPEPKTKSRTPPRRRSSRSSPELTRKARLSRRSRSASSSPETRSRTPPRHRRSPSVSSPEPAEKSRSSRRRRSASSPRTKTTSRRGRSPSPKPRGLQRSRSRSRREKTRTTRRRDRSGSSQSTSRRRQRSRSRSRVTRRRRGGSGYHSRSPARQESSRTSSRRRRGRSRTPPTSRKRSRSRTSPAPWKRSRSRASPATHRRSRSRTPLISRRRSRSRTSPVSRRRSRSRTSVTRRRSRSRASPVSRRRSRSRTPPVTRRRSRSRTPTTRRRSRSRTPPVTRRRSRSRTPPVTRRRSRSRTSPITRRRSRSRTSPVTRRRSRSRTSPVTRRRSRSRTSPVTRRRSRSRTPPAIRRRSRSRTPLLPRKRSRSRSPLAIRRRSRSRTPRTARGKRSLTRSPPAIRRRSASGSSSDRSRSATPPATRNHSGSRTPPVALNSSRMSCFSRPSMSPTPLDRCRSPGMLEPLGSSRTPMSVLQQAGGSMMDGPGPRIPDHQRTSVPENHAQSRIALALTAISLGTARPPPSMSAAGLAARMSQVPAPVPLMSLRTAPAANLASRIPAASAAAMNLASARTPAIPTAVNLADSRTPAAAAAMNLASPRTAVAPSAVNLADPRTPTAPAVNLAGARTPAALAALSLTGSGTPPTAANYPSSSRTPQAPASANLVGPRSAHATAPVNIAGSRTAAALAPASLTSARMAPALSGANLTSPRVPLSAYERVSGRTSPPLLDRARSRTPPSAPSQSRMTSERAPSPSSRMGQAPSQSLLPPAQDQPRSPVPSAFSDQSRCLIAQTTPVAGSQSLSSGAVATTTSSAGDHNGMLSVPAPGVPHSDVGEPPASTGAQQPSALAALQPAKERRSSSSSSSSSSSSSSSSSSSSSSSSSGSSSSDSEGSSLPVQPEVALKRVPSPTPAPKEAVREGRPPEPTPAKRKRRSSSSSSSSSSSSSSSSSSSSSSSSSSSSSSSSSSSSSSSSSSPSPAKPGPQALPKPASPKKPPPGERRSRSPRKPIDSLRDSRSLSYSPVERRRPSPQPSPRDQQSSSSERGSRRGQRGDSRSPSHKRRRETPSPRPMRHRSSRSP.

Position 1 is an N-acetylmethionine (Met-1). Residues 60-92 (HERKRRVELRCLELEEMMEEQGYEEQQIQEKVA) are a coiled coil. N6-acetyllysine is present on Lys-101. Residues Lys-108 and Lys-130 each participate in a glycyl lysine isopeptide (Lys-Gly) (interchain with G-Cter in SUMO2) cross-link. The disordered stretch occupies residues 141-2131 (ISDSYVDGSS…MSPTPLDRCR (1991 aa)). Tyr-145 bears the Phosphotyrosine mark. Position 169 is an N6-acetyllysine (Lys-169). Positions 175–185 (RESSSSRSPTP) are enriched in low complexity. Composition is skewed to basic residues over residues 186-197 (KQKKKKKKKDRG) and 207-249 (RERK…KRSR). The sufficient for RNA-binding stretch occupies residues 197–259 (GRRSESSSPR…STTPAPKSRR (63 aa)). Residues Ser-220 and Ser-222 each carry the phosphoserine modification. Positions 263-290 (STSADSASSSDTSRSRSRSAAAKTHTTA) are enriched in low complexity. At Thr-286 the chain carries Phosphothreonine. A phosphoserine mark is found at Ser-295, Ser-297, Ser-300, Ser-322, and Ser-323. Positions 313-333 (PGTTSTQRPSSPETATKQPSS) are enriched in polar residues. The segment covering 335–347 (YEDKDKDKKEKSA) has biased composition (basic and acidic residues). Positions 348-360 (TRPSPSPERSSTG) are enriched in low complexity. Phosphoserine occurs at positions 351, 353, 357, and 358. 2 positions are modified to phosphothreonine: Thr-359 and Thr-367. At Ser-377 the chain carries Phosphoserine. Positions 380–398 (PLATTPLSQEPVNPPSEAS) are enriched in polar residues. A phosphothreonine mark is found at Thr-383 and Thr-384. Residues Ser-387, Ser-395, Ser-398, Ser-404, and Ser-408 each carry the phosphoserine modification. Positions 399–410 (PTRDRSPPKSPE) are enriched in basic and acidic residues. A compositionally biased stretch (low complexity) spans 411–421 (KLPQSSSSESS). 6 positions are modified to phosphoserine: Ser-424, Ser-435, Ser-436, Ser-437, Ser-440, and Ser-454. Over residues 461 to 483 (NRSHGRAKRDKSHSHTPSRRMGR) the composition is skewed to basic residues. 8 positions are modified to phosphoserine: Ser-484, Ser-486, Ser-506, Ser-508, Ser-510, Ser-534, Ser-536, and Ser-543. The span at 491–536 (KRGRSRSRTPTKRGHSRSRSPQWRRSRSAQRWGRSRSPQRRGRSRS) shows a compositional bias: basic residues. Residues 537 to 546 (PQRPGWSRSR) are compositionally biased toward low complexity. Basic residues-rich tracts occupy residues 547-564 (NTQRRGRSRSARRGRSHS), 571-723 (GRSR…RRGR), and 732-742 (NKSRTSQRRSR). Phosphoserine is present on residues Ser-702, Ser-704, and Ser-706. Phosphoserine occurs at positions 778, 780, and 783. Positions 790–805 (SQTPPRRSRSGSSQPK) are enriched in low complexity. Over residues 806-816 (AKSRTPPRRSR) the composition is skewed to basic residues. Residues 828 to 841 (KTPSRQSHSSSSPH) are compositionally biased toward low complexity. Phosphoserine occurs at positions 846 and 854. Polar residues predominate over residues 849–869 (PPRQGSITSPQANEQSVTPQR). Phosphothreonine is present on Thr-856. A phosphoserine mark is found at Ser-857 and Ser-864. The residue at position 866 (Thr-866) is a Phosphothreonine. A phosphoserine mark is found at Ser-871, Ser-875, Ser-876, Ser-908, Ser-935, Ser-950, Ser-952, Ser-954, Ser-957, Ser-968, Ser-970, Ser-972, Ser-973, and Ser-974. Composition is skewed to low complexity over residues 901–917 (SSTPPRQSPSRSSSPQP) and 924–945 (SPRQRSHSGSSSPSPSRVTSRT). 2 positions are modified to phosphothreonine: Thr-977 and Thr-983. Phosphoserine occurs at positions 992 and 994. Tyr-996 is modified (phosphotyrosine). At Thr-1003 the chain carries Phosphothreonine. Positions 1008-1017 (SLSGSKSPCP) are enriched in low complexity. 6 positions are modified to phosphoserine: Ser-1010, Ser-1014, Ser-1024, Ser-1028, Ser-1032, and Ser-1042. Positions 1040 to 1064 (KSSTPPGESYFGVSSLQLKGQSQTS) are enriched in polar residues. Residue Thr-1043 is modified to Phosphothreonine. A Phosphotyrosine modification is found at Tyr-1049. Ser-1064, Ser-1069, Ser-1072, Ser-1073, Ser-1083, Ser-1099, Ser-1101, Ser-1102, and Ser-1103 each carry phosphoserine. Residues 1071–1092 (TSSPEVRQSHSESPSLQSKSQT) show a composition bias toward polar residues. Residues 1093-1104 (SPKGGRSRSSSP) are compositionally biased toward low complexity. Thr-1106 bears the Phosphothreonine mark. Phosphoserine occurs at positions 1112, 1122, 1124, 1129, 1132, 1152, 1179, 1188, and 1198. The span at 1132–1159 (SPEQSRFQSDSSSYPTVDSNSLLGQSRL) shows a compositional bias: polar residues. A compositionally biased stretch (basic and acidic residues) spans 1204-1214 (DTLRTPPRERS). A Phosphothreonine modification is found at Thr-1208. 9 positions are modified to phosphoserine: Ser-1214, Ser-1219, Ser-1227, Ser-1254, Ser-1257, Ser-1258, Ser-1266, Ser-1270, and Ser-1271. The span at 1216 to 1233 (AGSSPETKEQNSALPTSS) shows a compositional bias: polar residues. Residues 1283 to 1292 (TLDQSQSQAS) show a composition bias toward polar residues. A phosphoserine mark is found at Ser-1311, Ser-1318, Ser-1320, Ser-1326, Ser-1329, Ser-1336, Ser-1348, Ser-1368, Ser-1382, Ser-1383, Ser-1384, Ser-1387, Ser-1401, Ser-1403, and Ser-1404. Residues 1318–1328 (SNSPLRENSFG) are compositionally biased toward polar residues. A compositionally biased stretch (polar residues) spans 1376-1386 (TRSSGHSSSEL). A Phosphothreonine modification is found at Thr-1413. Ser-1415, Ser-1421, Ser-1423, and Ser-1424 each carry phosphoserine. Thr-1434 carries the phosphothreonine modification. Over residues 1441–1452 (SGSSPGLRDGSG) the composition is skewed to low complexity. 2 positions are modified to phosphoserine: Ser-1444 and Ser-1451. Thr-1453 carries the post-translational modification Phosphothreonine. A compositionally biased stretch (polar residues) spans 1453-1463 (TPSRHSLSGSS). 4 positions are modified to phosphoserine: Ser-1458, Ser-1460, Ser-1462, and Ser-1463. A Phosphothreonine modification is found at Thr-1472. Phosphoserine occurs at positions 1482 and 1483. Residue Thr-1492 is modified to Phosphothreonine. Residues Ser-1497, Ser-1499, Ser-1501, and Ser-1502 each carry the phosphoserine modification. A Phosphothreonine modification is found at Thr-1511. Phosphoserine occurs at positions 1517, 1519, 1521, and 1522. At Thr-1531 the chain carries Phosphothreonine. Polar residues predominate over residues 1534–1544 (GQRSRSGSSQE). A phosphoserine mark is found at Ser-1537, Ser-1539, Ser-1541, Ser-1542, and Ser-1552. Over residues 1555–1567 (ERSESDSSPDSKA) the composition is skewed to basic and acidic residues. Positions 1568–1577 (KTRTPLRQRS) are enriched in basic residues. Phosphoserine occurs at positions 1577, 1579, 1581, 1582, 1598, 1600, 1601, 1616, 1620, 1621, 1648, 1658, 1691, 1693, and 1694. Low complexity predominate over residues 1638 to 1657 (SGSSSKGRGPSPEGSSSTES). The span at 1681–1691 (KSRTPPRRRSS) shows a compositional bias: basic residues. The residue at position 1698 (Thr-1698) is a Phosphothreonine. Phosphoserine occurs at positions 1727, 1729, 1731, 1732, 1762, and 1764. 2 stretches are compositionally biased toward basic residues: residues 1769 to 1789 (GLQRSRSRSRREKTRTTRRRD) and 1798 to 1816 (SRRRQRSRSRSRVTRRRRG). Ser-1818, Ser-1822, Ser-1854, Ser-1857, Ser-1876, and Ser-1878 each carry phosphoserine. The segment covering 1834-1854 (SSRRRRGRSRTPPTSRKRSRS) has biased composition (basic residues). Residues 1862–2068 (KRSRSRASPA…PRTARGKRSL (207 aa)) show a composition bias toward basic residues. Position 1880 is a phosphothreonine (Thr-1880). Phosphoserine is present on residues Ser-1884 and Ser-1890. A Phosphothreonine modification is found at Thr-1892. Residues Ser-1893, Ser-1916, Ser-1919, Ser-1923, and Ser-1925 each carry the phosphoserine modification. 2 positions are modified to phosphothreonine: Thr-1927 and Thr-1931. Phosphoserine is present on residues Ser-1946 and Ser-1948. Phosphothreonine is present on residues Thr-1950 and Thr-1954. 2 positions are modified to phosphoserine: Ser-1958 and Ser-1960. Phosphothreonine is present on residues Thr-1962 and Thr-1966. Residues Ser-1970, Ser-1972, and Ser-1975 each carry the phosphoserine modification. Thr-1978 is subject to Phosphothreonine. Phosphoserine occurs at positions 1984, 1987, 1996, 1999, 2008, 2011, 2018, and 2020. A Phosphothreonine modification is found at Thr-2022. Residues Ser-2030 and Ser-2032 each carry the phosphoserine modification. At Thr-2034 the chain carries Phosphothreonine. Phosphoserine is present on residues Ser-2042, Ser-2044, Ser-2046, and Ser-2067. At Thr-2069 the chain carries Phosphothreonine. Low complexity predominate over residues 2070–2095 (RSPPAIRRRSASGSSSDRSRSATPPA). Residues Ser-2071 and Ser-2090 each carry the phosphoserine modification. Thr-2092 carries the phosphothreonine modification. The span at 2097–2124 (RNHSGSRTPPVALNSSRMSCFSRPSMSP) shows a compositional bias: polar residues. Residues Ser-2100 and Ser-2102 each carry the phosphoserine modification. Thr-2104 is modified (phosphothreonine). Phosphoserine is present on residues Ser-2118, Ser-2121, Ser-2123, and Ser-2132. At Thr-2144 the chain carries Phosphothreonine. Arg-2194, Arg-2207, Arg-2231, and Arg-2246 each carry omega-N-methylarginine. Ser-2272 is subject to Phosphoserine. Omega-N-methylarginine is present on residues Arg-2274 and Arg-2288. Phosphothreonine occurs at positions 2289, 2291, and 2302. Ser-2310 carries the phosphoserine modification. The tract at residues 2311–2342 (LTGSGTPPTAANYPSSSRTPQAPASANLVGPR) is disordered. Phosphothreonine is present on residues Thr-2316 and Thr-2329. The span at 2317–2334 (PPTAANYPSSSRTPQAPA) shows a compositional bias: polar residues. Ser-2335 is subject to Phosphoserine. Omega-N-methylarginine is present on Arg-2342. Ser-2343, Ser-2368, and Ser-2376 each carry phosphoserine. Position 2381 is a phosphothreonine (Thr-2381). Ser-2382 is modified (phosphoserine). Position 2384 is an asymmetric dimethylarginine; alternate (Arg-2384). Arg-2384 is modified (omega-N-methylarginine; alternate). The tract at residues 2389–2752 (AYERVSGRTS…PMRHRSSRSP (364 aa)) is disordered. 3 positions are modified to phosphoserine: Ser-2394, Ser-2398, and Ser-2407. The residue at position 2409 (Thr-2409) is a Phosphothreonine. Phosphoserine occurs at positions 2412, 2415, 2426, 2429, 2449, and 2453. The span at 2426–2439 (SPSSRMGQAPSQSL) shows a compositional bias: polar residues. The span at 2455 to 2473 (FSDQSRCLIAQTTPVAGSQ) shows a compositional bias: polar residues. Low complexity-rich tracts occupy residues 2474-2487 (SLSSGAVATTTSSA), 2515-2526 (AQQPSALAALQP), and 2533-2567 (SSSSSSSSSSSSSSSSSSSSSSSSGSSSSDSEGSS). Ser-2581 is subject to Phosphoserine. Thr-2583 carries the phosphothreonine modification. Residue Lys-2587 forms a Glycyl lysine isopeptide (Lys-Gly) (interchain with G-Cter in SUMO2) linkage. Position 2599 is a phosphothreonine (Thr-2599). Low complexity predominate over residues 2608-2648 (SSSSSSSSSSSSSSSSSSSSSSSSSSSSSSSSSSSSSSSSS). Residues 2651 to 2668 (PAKPGPQALPKPASPKKP) show a composition bias toward pro residues. Ser-2664, Ser-2675, Ser-2677, Ser-2684, Ser-2688, Ser-2690, Ser-2692, Ser-2694, Ser-2702, and Ser-2706 each carry phosphoserine. Positions 2669–2689 (PPGERRSRSPRKPIDSLRDSR) are enriched in basic and acidic residues. Residues 2707–2716 (PRDQQSSSSE) show a composition bias toward low complexity. Over residues 2717-2729 (RGSRRGQRGDSRS) the composition is skewed to basic and acidic residues. A Phosphothreonine modification is found at Thr-2738. Ser-2740 carries the post-translational modification Phosphoserine. Residues 2743–2752 (PMRHRSSRSP) are compositionally biased toward basic residues.

This sequence belongs to the CWC21 family. Component of pre-catalytic, catalytic and post-catalytic spliceosome complexes. Found in a pre-mRNA splicing complex with SFRS4, SFRS5, SNRP70, SNRPA1, SRRM1 and SRRM2. Component of the minor spliceosome, which splices U12-type introns. Interacts with DHX8. Interacts with CACTIN. Expressed in liver, placenta, and white blood cells.

Its subcellular location is the nucleus. It localises to the nucleus speckle. Functionally, required for pre-mRNA splicing as component of the spliceosome. As a component of the minor spliceosome, involved in the splicing of U12-type introns in pre-mRNAs. This chain is Serine/arginine repetitive matrix protein 2 (SRRM2), found in Homo sapiens (Human).